A 278-amino-acid chain; its full sequence is Tumor necrosis factor receptor superfamily member 5 (278 aa).

A signal peptide spans 1-20 (MVRLPLKCLLWGCFLTAVHP). Residues 21-194 (EPPTSCKENQ…VCGFQSRMRA (174 aa)) are Extracellular-facing. 4 TNFR-Cys repeats span residues 25–60 (SCKE…TECL), 61–103 (PCSS…DTTC), 104–144 (VCSE…TICE), and 145–187 (PCPV…VVCG). Cystine bridges form between Cys-26/Cys-37, Cys-38/Cys-51, Cys-41/Cys-59, Cys-62/Cys-77, Cys-83/Cys-103, Cys-105/Cys-119, Cys-111/Cys-116, and Cys-125/Cys-143. Residues Asn-153 and Asn-180 are each glycosylated (N-linked (GlcNAc...) asparagine). Residues 195–215 (LVVIPITLGILFAVLLVFLCI) form a helical membrane-spanning segment. At 216–278 (RKVTKEQETK…ESRISVQERE (63 aa)) the chain is on the cytoplasmic side.

In terms of assembly, monomer and homodimer. Interacts with TRAF1, TRAF2, TRAF3, TRAF5 and TRAF6. Interacts with TRAF6 and MAP3K8; the interaction is required for ERK activation.

The protein localises to the membrane. Functionally, receptor for TNFSF5/CD40LG. Transduces TRAF6- and MAP3K8-mediated signals that activate ERK in macrophages and B cells, leading to induction of immunoglobulin secretion. The polypeptide is Tumor necrosis factor receptor superfamily member 5 (CD40) (Sus scrofa (Pig)).